A 138-amino-acid chain; its full sequence is Class I hydrophobin 1 (138 aa).

The signal sequence occupies residues 1–19 (MRFSAATVSALAMALTVAA). Cystine bridges form between Cys45–Cys113, Cys53–Cys107, Cys54–Cys91, and Cys114–Cys131.

Belongs to the fungal hydrophobin family. In terms of assembly, interacts with the lipid droplet coating protein Cap20.

The protein localises to the secreted. It localises to the lipid droplet. Its function is as follows. Aerial growth, conidiation, and dispersal of filamentous fungi in the environment rely upon a capability of their secreting small amphipathic proteins called hydrophobins (HPBs) with low sequence identity. Class I can self-assemble into an outermost layer of rodlet bundles on aerial cell surfaces, conferring cellular hydrophobicity that supports fungal growth, development and dispersal; whereas Class II form highly ordered films at water-air interfaces through intermolecular interactions but contribute nothing to the rodlet structure. Hydr1 is a class I hydrophobin involved in spore germination, appressorium formation, but not in the formation of the rodlet layer of conidia. Responsible for the full virulence on rubber tree leaves. This chain is Class I hydrophobin 1, found in Colletotrichum siamense (Anthracnose fungus).